The primary structure comprises 85 residues: uncharacterized protein (85 aa).

This is an uncharacterized protein from Saccharomyces cerevisiae (strain ATCC 204508 / S288c) (Baker's yeast).